The following is a 582-amino-acid chain: Phosphoglucomutase, cytoplasmic (582 aa).

Arg-25 and Ser-124 together coordinate alpha-D-glucose 1,6-bisphosphate. The active-site Phosphoserine intermediate is Ser-124. The Mg(2+) site is built by Ser-124, Asp-300, Asp-302, and Asp-304. Residue Ser-124 is modified to Phosphoserine. Alpha-D-glucose 1,6-bisphosphate is bound by residues Asp-304, Arg-305, Thr-368, Glu-387, Ser-389, and Lys-400.

It belongs to the phosphohexose mutase family. In terms of assembly, monomer. Requires Mg(2+) as cofactor.

It is found in the cytoplasm. The catalysed reaction is alpha-D-glucose 1-phosphate = alpha-D-glucose 6-phosphate. It catalyses the reaction O-phospho-L-seryl-[protein] + alpha-D-glucose 1-phosphate = alpha-D-glucose 1,6-bisphosphate + L-seryl-[protein]. The enzyme catalyses alpha-D-glucose 1,6-bisphosphate + L-seryl-[protein] = O-phospho-L-seryl-[protein] + alpha-D-glucose 6-phosphate. Functionally, catalyzes the reversible isomerization of alpha-D-glucose 1-phosphate to alpha-D-glucose 6-phosphate. The mechanism proceeds via the intermediate compound alpha-D-glucose 1,6-bisphosphate. This enzyme participates in both the breakdown and synthesis of glucose. This is Phosphoglucomutase, cytoplasmic (PGM1) from Pisum sativum (Garden pea).